A 175-amino-acid polypeptide reads, in one-letter code: Large ribosomal subunit protein uL10 (175 aa).

It belongs to the universal ribosomal protein uL10 family. Part of the ribosomal stalk of the 50S ribosomal subunit. The N-terminus interacts with L11 and the large rRNA to form the base of the stalk. The C-terminus forms an elongated spine to which L12 dimers bind in a sequential fashion forming a multimeric L10(L12)X complex.

Functionally, forms part of the ribosomal stalk, playing a central role in the interaction of the ribosome with GTP-bound translation factors. In Prochlorococcus marinus (strain SARG / CCMP1375 / SS120), this protein is Large ribosomal subunit protein uL10.